Consider the following 86-residue polypeptide: MPKSDIHPTWYPEAKVICNGEVVMTTGATQPEIQVDVWSGNHPFFTGTQKILDTEGRVDRFMRKYGMASSDSSEQKDKSSEEKKES.

Residues 65-86 are disordered; the sequence is YGMASSDSSEQKDKSSEEKKES. Positions 73–86 are enriched in basic and acidic residues; it reads SEQKDKSSEEKKES.

The protein belongs to the bacterial ribosomal protein bL31 family. Type A subfamily. Part of the 50S ribosomal subunit.

Functionally, binds the 23S rRNA. This chain is Large ribosomal subunit protein bL31, found in Prochlorococcus marinus (strain NATL2A).